We begin with the raw amino-acid sequence, 339 residues long: U11/U12 small nuclear ribonucleoprotein 48 kDa protein (339 aa).

The CHHC U11-48K-type zinc finger occupies 55 to 82 (VVICPYDSNHHMPKSSLAKHMASCRLRK). 4 residues coordinate Zn(2+): cysteine 58, histidine 64, histidine 74, and cysteine 78. Residues lysine 87 and lysine 104 each participate in a glycyl lysine isopeptide (Lys-Gly) (interchain with G-Cter in SUMO2) cross-link. The interval 255 to 339 (HWQEEQEKAE…HSHKRRKQKI (85 aa)) is disordered. The segment covering 294 to 309 (RHRRDRSRSPHKRKRN) has biased composition (basic residues). Residues 310-328 (KDKDKNCESRRRKERDGER) show a composition bias toward basic and acidic residues. The segment covering 329 to 339 (HHSHKRRKQKI) has biased composition (basic residues).

As to quaternary structure, component of the U11/U12 snRNPs that are part of the U12-type spliceosome. Not found in the major spliceosome.

It is found in the nucleus. In terms of biological role, likely involved in U12-type 5' splice site recognition. This chain is U11/U12 small nuclear ribonucleoprotein 48 kDa protein (SNRNP48), found in Homo sapiens (Human).